A 203-amino-acid polypeptide reads, in one-letter code: 5-formyltetrahydrofolate cyclo-ligase (203 aa).

Alanine 2 bears the N-acetylalanine mark. ATP-binding positions include 10–14 (KRSLR) and arginine 14. Substrate-binding positions include leucine 56, glutamate 61, and 148-152 (RGKGY). 145–153 (RLGRGKGYY) is a binding site for ATP. Mg(2+) contacts are provided by aspartate 154 and aspartate 189.

This sequence belongs to the 5-formyltetrahydrofolate cyclo-ligase family. As to quaternary structure, monomer. Mg(2+) serves as cofactor.

The protein resides in the cytoplasm. The enzyme catalyses (6S)-5-formyl-5,6,7,8-tetrahydrofolate + ATP = (6R)-5,10-methenyltetrahydrofolate + ADP + phosphate. Functionally, contributes to tetrahydrofolate metabolism. Helps regulate carbon flow through the folate-dependent one-carbon metabolic network that supplies carbon for the biosynthesis of purines, thymidine and amino acids. Catalyzes the irreversible conversion of 5-formyltetrahydrofolate (5-FTHF) to yield 5,10-methenyltetrahydrofolate. The chain is 5-formyltetrahydrofolate cyclo-ligase (MTHFS) from Homo sapiens (Human).